A 490-amino-acid polypeptide reads, in one-letter code: Glutamate--tRNA ligase (490 aa).

The short motif at 13–23 (PSPTGTPHVGL) is the 'HIGH' region element. The 'KMSKS' region signature appears at 257–261 (KLSKR). K260 contributes to the ATP binding site.

This sequence belongs to the class-I aminoacyl-tRNA synthetase family. Glutamate--tRNA ligase type 1 subfamily. As to quaternary structure, monomer.

It is found in the cytoplasm. The catalysed reaction is tRNA(Glu) + L-glutamate + ATP = L-glutamyl-tRNA(Glu) + AMP + diphosphate. Catalyzes the attachment of glutamate to tRNA(Glu) in a two-step reaction: glutamate is first activated by ATP to form Glu-AMP and then transferred to the acceptor end of tRNA(Glu). The sequence is that of Glutamate--tRNA ligase from Mycobacterium tuberculosis (strain ATCC 25177 / H37Ra).